Consider the following 229-residue polypeptide: Coiled-coil domain-containing protein 134 (229 aa).

The first 22 residues, 1-22 (MDLLQSLAVFFVLLLPGTEVTG), serve as a signal peptide directing secretion. N-linked (GlcNAc...) asparagine glycosylation is present at asparagine 148. The disordered stretch occupies residues 191–229 (PSTDPFQKALREEEKRRKKEEKRKEIRKGPRISRSQSEL). Positions 196 to 218 (FQKALREEEKRRKKEEKRKEIRK) form a coiled coil. The Prevents secretion from ER signature appears at 226 to 229 (QSEL).

Belongs to the CCDC134 family. In terms of assembly, interacts with TADA2A. Associates with the PCAF complex via TADA2A binding. In terms of processing, O-glycosylated, with additional sialic acid modifications.

It localises to the endoplasmic reticulum lumen. It is found in the secreted. The protein resides in the cytoplasm. Its subcellular location is the nucleus. Molecular adapter required to prevent protein hyperglycosylation of HSP90B1: during translation, associates with nascent HSP90B1 and the STT3A catalytic component of the OST-A complex and tethers them to a specialized translocon that forms a microenvironment for HSP90B1 folding. In the CCDC134-containing translocon, STT3A associates with the SRT pseudosubstrate motif of HSP90B1, preventing access to facultative glycosylation sites until folding is completed, preventing hyperglycosylation and subsequent degradation of HSP90B1. In extracellular secreted form, promotes proliferation and activation of CD8(+) T-cells, suggesting a cytokine-like function. May inhibit ERK and JNK signaling activity. May suppress cell migration and invasion activity, via its effects on ERK and JNK signaling. May also localize in the nucleus: enhances stability of the PCAF histone acetyltransferase (HAT) complex member TADA2A and thus promotes PCAF-mediated histone acetyltransferase activity. Has a critical role in the regulation of osteogenesis and bone development. The sequence is that of Coiled-coil domain-containing protein 134 (Ccdc134) from Rattus norvegicus (Rat).